The following is a 1820-amino-acid chain: Afadin (1820 aa).

Residues Phe-39–Asp-133 form the Ras-associating 1 domain. The disordered stretch occupies residues Lys-129–Ser-196. The stretch at Glu-146 to Arg-186 forms a coiled coil. Residues Thr-160 to Lys-172 are compositionally biased toward basic residues. The span at Glu-173–Gln-189 shows a compositional bias: basic and acidic residues. A phosphoserine mark is found at Ser-216, Ser-246, and Ser-256. The Ras-associating 2 domain maps to Ser-246 to Pro-348. Residues Lys-356 to Asp-371 show a composition bias toward basic and acidic residues. The segment at Lys-356 to Ser-377 is disordered. Residues Ser-391 and Ser-424 each carry the phosphoserine modification. An FHA domain is found at Thr-426–Gly-492. A phosphoserine mark is found at Ser-512, Ser-557, Ser-562, Ser-655, Ser-1083, Ser-1107, Ser-1126, Ser-1140, Ser-1143, Ser-1172, Ser-1173, Ser-1182, and Ser-1199. The disordered stretch occupies residues Gly-538 to Arg-569. Positions Asp-653–Asn-908 constitute a Dilute domain. Residues Ile-1007–Gly-1093 form the PDZ domain. Residues Ser-1107–Ala-1194 are disordered. Over residues Ile-1113–Gly-1128 the composition is skewed to basic and acidic residues. The span at Tyr-1132 to Ser-1143 shows a compositional bias: polar residues. Residues Ser-1152 to Ser-1172 show a composition bias toward basic and acidic residues. The interval Gly-1203–Pro-1222 is disordered. Position 1232 is a phosphothreonine (Thr-1232). 3 disordered regions span residues Ala-1235 to Glu-1278, Gln-1308 to Gln-1527, and Arg-1567 to Gln-1716. Position 1238 is a phosphoserine (Ser-1238). Residues Tyr-1252–Ser-1262 are compositionally biased toward basic and acidic residues. Position 1275 is a phosphoserine (Ser-1275). Residues Ser-1309–Ser-1318 show a composition bias toward low complexity. Over residues Ser-1325–Lys-1337 the composition is skewed to polar residues. Position 1328 is a phosphoserine (Ser-1328). Residue Thr-1330 is modified to Phosphothreonine. The segment covering Leu-1364–Val-1373 has biased composition (pro residues). The segment covering Glu-1407–Leu-1440 has biased composition (basic and acidic residues). Positions Lys-1410–Gln-1446 form a coiled coil. Over residues Met-1443–Ala-1457 the composition is skewed to polar residues. Basic and acidic residues predominate over residues Thr-1487–Leu-1503. Phosphoserine is present on residues Ser-1499 and Ser-1510. Residues Pro-1513–Gln-1526 are compositionally biased toward basic and acidic residues. Positions Glu-1523–Glu-1561 form a coiled coil. The span at Glu-1576–Asp-1587 shows a compositional bias: acidic residues. Positions Gln-1593–Gln-1665 form a coiled coil. A compositionally biased stretch (basic and acidic residues) spans Leu-1595–Glu-1675. A phosphoserine mark is found at Ser-1694, Ser-1719, Ser-1770, and Ser-1795. Residues Glu-1734–Lys-1820 are disordered. The span at Ala-1759 to Asp-1772 shows a compositional bias: basic and acidic residues. Positions Val-1800–Lys-1820 are enriched in basic and acidic residues. Lys-1803 is subject to N6-acetyllysine.

As to quaternary structure, homodimer. Interacts with F-actin, nectin and NECTIN3. Essential for the association of nectin and E-cadherin. Isoform 2/s-afadin does not interact with F-actin. Interacts with ZO-1 and occludin, but probably in an indirect manner. Interacts with RIT1, RIT2, NRXN1 and BCR. Interacts with ADAM10; the interaction locks ADAM10 at adherens junctions following ADAM10 recruitment to adherens junctions by TSPAN33. As to expression, isoform 1 is expressed only in a restricted set of epithelial structures during early embryogenesis.

The protein localises to the cell junction. It is found in the adherens junction. Functionally, belongs to an adhesion system, probably together with the E-cadherin-catenin system, which plays a role in the organization of homotypic, interneuronal and heterotypic cell-cell adherens junctions (AJs). Nectin- and actin-filament-binding protein that connects nectin to the actin cytoskeleton. May play a key role in the organization of epithelial structures of the embryonic ectoderm. Essential for the organization of adherens junctions. This chain is Afadin, found in Mus musculus (Mouse).